Reading from the N-terminus, the 195-residue chain is Biogenesis of lysosome-related organelles complex 1 subunit 3 (195 aa).

Positions 1 to 11 (MESSQGRRRRP) are enriched in basic residues. The tract at residues 1 to 72 (MESSQGRRRR…PEPEPTVVPV (72 aa)) is disordered. The segment covering 25-51 (ELSASSSEEELYLGPSGPTRGRPTGLR) has biased composition (low complexity). T59 bears the Phosphothreonine mark. S61 bears the Phosphoserine mark.

Belongs to the BLOC1S3 family. As to quaternary structure, octamer composed of one copy each BLOC1S1, BLOC1S2, BLOC1S3, BLOC1S4, BLOC1S5, BLOC1S6, DTNBP1/BLOC1S7 and SNAPIN/BLOC1S8. Interacts directly with BLOC1S2. Component of the biogenesis of lysosome-related organelles complex 1 (BLOC-1) composed of BLOC1S1, BLOC1S2, BLOC1S3, BLOC1S4, BLOC1S5, BLOC1S6, DTNBP1/BLOC1S7 and SNAPIN/BLOC1S8. The BLOC-1 complex associates with the AP-3 protein complex and membrane protein cargos. Interacts with BLOC1S4, BLOC1S5 and BLOC1S6. In terms of processing, phosphorylated. In terms of tissue distribution, ubiquitously expressed.

The protein resides in the cytoplasm. In terms of biological role, component of the BLOC-1 complex, a complex that is required for normal biogenesis of lysosome-related organelles (LRO), such as platelet dense granules and melanosomes. In concert with the AP-3 complex, the BLOC-1 complex is required to target membrane protein cargos into vesicles assembled at cell bodies for delivery into neurites and nerve terminals. The BLOC-1 complex, in association with SNARE proteins, is also proposed to be involved in neurite extension. Plays a role in intracellular vesicle trafficking. The sequence is that of Biogenesis of lysosome-related organelles complex 1 subunit 3 (Bloc1s3) from Mus musculus (Mouse).